The sequence spans 139 residues: uncharacterized protein (139 aa).

This is an uncharacterized protein from Saccharolobus islandicus (Sulfolobus islandicus).